Reading from the N-terminus, the 366-residue chain is Phenylalanine--tRNA ligase alpha subunit (366 aa).

Glu-264 is a Mg(2+) binding site.

It belongs to the class-II aminoacyl-tRNA synthetase family. Phe-tRNA synthetase alpha subunit type 1 subfamily. In terms of assembly, tetramer of two alpha and two beta subunits. Requires Mg(2+) as cofactor.

The protein localises to the cytoplasm. The enzyme catalyses tRNA(Phe) + L-phenylalanine + ATP = L-phenylalanyl-tRNA(Phe) + AMP + diphosphate + H(+). The polypeptide is Phenylalanine--tRNA ligase alpha subunit (Zymomonas mobilis subsp. mobilis (strain ATCC 31821 / ZM4 / CP4)).